The sequence spans 790 residues: Penicillin-binding protein 1A (790 aa).

Residues 1–6 (MYKSLF) lie on the Cytoplasmic side of the membrane. A helical; Signal-anchor for type II membrane protein membrane pass occupies residues 7–27 (FCLKIFAVLILVGCGITAYII). The Periplasmic segment spans residues 28-790 (YHYSRDLPDY…SKEDQSQEIY (763 aa)). The tract at residues 49 to 220 (TRIYSHDGKL…SELNPERNYA (172 aa)) is transglycosylase. E87 serves as the catalytic Proton donor; for transglycosylase activity. The interval 398 to 711 (DVIVVEPIKD…SNVVLPIFID (314 aa)) is transpeptidase. S457 serves as the catalytic Acyl-ester intermediate; for transpeptidase activity.

This sequence in the N-terminal section; belongs to the glycosyltransferase 51 family. The protein in the C-terminal section; belongs to the transpeptidase family.

The protein localises to the cell inner membrane. The enzyme catalyses [GlcNAc-(1-&gt;4)-Mur2Ac(oyl-L-Ala-gamma-D-Glu-L-Lys-D-Ala-D-Ala)](n)-di-trans,octa-cis-undecaprenyl diphosphate + beta-D-GlcNAc-(1-&gt;4)-Mur2Ac(oyl-L-Ala-gamma-D-Glu-L-Lys-D-Ala-D-Ala)-di-trans,octa-cis-undecaprenyl diphosphate = [GlcNAc-(1-&gt;4)-Mur2Ac(oyl-L-Ala-gamma-D-Glu-L-Lys-D-Ala-D-Ala)](n+1)-di-trans,octa-cis-undecaprenyl diphosphate + di-trans,octa-cis-undecaprenyl diphosphate + H(+). The catalysed reaction is Preferential cleavage: (Ac)2-L-Lys-D-Ala-|-D-Ala. Also transpeptidation of peptidyl-alanyl moieties that are N-acyl substituents of D-alanine.. The protein operates within cell wall biogenesis; peptidoglycan biosynthesis. Cell wall formation. Synthesis of cross-linked peptidoglycan from the lipid intermediates. The enzyme has a penicillin-insensitive transglycosylase N-terminal domain (formation of linear glycan strands) and a penicillin-sensitive transpeptidase C-terminal domain (cross-linking of the peptide subunits). The chain is Penicillin-binding protein 1A (mrcA) from Rickettsia felis (strain ATCC VR-1525 / URRWXCal2) (Rickettsia azadi).